The following is a 276-amino-acid chain: 2-dehydro-3-deoxyphosphooctonate aldolase (276 aa).

This sequence belongs to the KdsA family.

It localises to the cytoplasm. It carries out the reaction D-arabinose 5-phosphate + phosphoenolpyruvate + H2O = 3-deoxy-alpha-D-manno-2-octulosonate-8-phosphate + phosphate. Its pathway is carbohydrate biosynthesis; 3-deoxy-D-manno-octulosonate biosynthesis; 3-deoxy-D-manno-octulosonate from D-ribulose 5-phosphate: step 2/3. It functions in the pathway bacterial outer membrane biogenesis; lipopolysaccharide biosynthesis. This Xanthomonas oryzae pv. oryzae (strain MAFF 311018) protein is 2-dehydro-3-deoxyphosphooctonate aldolase.